The chain runs to 49 residues: MLFDTHAHLNAVQYEEDLEQVIERARAEGVSHIVVVGFDRPTIDRAIEL.

It belongs to the metallo-dependent hydrolases superfamily. TatD-type hydrolase family. It depends on a divalent metal cation as a cofactor.

This is an uncharacterized protein from Geobacillus stearothermophilus (Bacillus stearothermophilus).